The primary structure comprises 175 residues: Peptide deformylase (175 aa).

Residues Cys98 and His140 each contribute to the Fe cation site. Glu141 is a catalytic residue. His144 provides a ligand contact to Fe cation.

The protein belongs to the polypeptide deformylase family. Fe(2+) serves as cofactor.

The enzyme catalyses N-terminal N-formyl-L-methionyl-[peptide] + H2O = N-terminal L-methionyl-[peptide] + formate. Removes the formyl group from the N-terminal Met of newly synthesized proteins. Requires at least a dipeptide for an efficient rate of reaction. N-terminal L-methionine is a prerequisite for activity but the enzyme has broad specificity at other positions. In Bradyrhizobium sp. (strain BTAi1 / ATCC BAA-1182), this protein is Peptide deformylase.